Consider the following 270-residue polypeptide: 4-hydroxy-tetrahydrodipicolinate reductase (270 aa).

Residues 11-16 (GAGGRM) and Glu37 contribute to the NAD(+) site. Residue Arg38 coordinates NADP(+). Residues 101–103 (GTT) and 125–128 (APNM) each bind NAD(+). The active-site Proton donor/acceptor is the His158. (S)-2,3,4,5-tetrahydrodipicolinate is bound at residue His159. Lys162 (proton donor) is an active-site residue. 168-169 (GT) is a binding site for (S)-2,3,4,5-tetrahydrodipicolinate.

Belongs to the DapB family.

It is found in the cytoplasm. The catalysed reaction is (S)-2,3,4,5-tetrahydrodipicolinate + NAD(+) + H2O = (2S,4S)-4-hydroxy-2,3,4,5-tetrahydrodipicolinate + NADH + H(+). The enzyme catalyses (S)-2,3,4,5-tetrahydrodipicolinate + NADP(+) + H2O = (2S,4S)-4-hydroxy-2,3,4,5-tetrahydrodipicolinate + NADPH + H(+). The protein operates within amino-acid biosynthesis; L-lysine biosynthesis via DAP pathway; (S)-tetrahydrodipicolinate from L-aspartate: step 4/4. In terms of biological role, catalyzes the conversion of 4-hydroxy-tetrahydrodipicolinate (HTPA) to tetrahydrodipicolinate. The protein is 4-hydroxy-tetrahydrodipicolinate reductase of Shewanella sp. (strain MR-4).